The sequence spans 166 residues: Large ribosomal subunit protein mL49 (166 aa).

This sequence belongs to the mitochondrion-specific ribosomal protein mL49 family. In terms of assembly, component of the mitochondrial ribosome large subunit (39S) which comprises a 16S rRNA and about 50 distinct proteins. Interacts with OXA1L.

The protein resides in the mitochondrion. This chain is Large ribosomal subunit protein mL49 (MRPL49), found in Bos taurus (Bovine).